Consider the following 231-residue polypeptide: Claudin-10 (231 aa).

Residues 1–21 (MASTALEIVAFVVSISGWVLV) form a helical membrane-spanning segment. Over 22 to 80 (SSTLPTDYWKVSTIDGTVITTATYFANLWKICVTDSTGVANCKEFPSMLALDGYIQACR) the chain is Extracellular. Residues 81–101 (GLMIAAVSLGFFGSIFALFGM) form a helical membrane-spanning segment. Residues 102 to 115 (KCTKVGGSDQAKAK) are Cytoplasmic-facing. The helical transmembrane segment at 116–136 (IACLAGIVFILSGLCSMTGCS) threads the bilayer. Over 137–160 (LYANKITTEFFDPLYMEQKYELGA) the chain is Extracellular. The helical transmembrane segment at 161–181 (ALFIGWAGASLCIIGGVIFCF) threads the bilayer. Topologically, residues 182 to 231 (SISDNNKTPRMGYTYNGPTSAMSSRTKYQGGEGDFKTTGPSKQFDKNAYV) are cytoplasmic.

This sequence belongs to the claudin family. In terms of assembly, can form homodimers both in trans (interaction between CLDN10 molecules in opposing membranes) and in cis (interaction between CLDN10 molecules within one membrane). Interacts with CLDN19. Widely expressed, with highest expression detected in brain cortex, kidney and lung. In kidney, the expression is highest in medulla, with transcripts being detected in medullary thick ascending limb of Henle's loop (mTAL) and outer and inner medullary collecting ducts. Expressed in salivary glands and skin. In terms of tissue distribution, detected in kidney with transcripts being detected in PCT, mTAL and cortical collecting duct. Detected in uterus. Expressed in proximal tubules (at protein level). As to expression, only detected in kidney and uterus. Detected in kidney with transcripts being detected in PCT, mTAL and cortical collecting duct. Detected in uterus. In terms of tissue distribution, expressed in the inner ear where it is detected in organ of Corti, marginal cells of stria vascularis, Reissner's membrane and spiral limbus (at protein level).

The protein localises to the cell junction. Its subcellular location is the tight junction. It is found in the cell membrane. It localises to the endoplasmic reticulum. The catalysed reaction is Na(+)(in) = Na(+)(out). It carries out the reaction Li(+)(in) = Li(+)(out). It catalyses the reaction K(+)(in) = K(+)(out). The enzyme catalyses Rb(+)(in) = Rb(+)(out). The catalysed reaction is Cs(+)(in) = Cs(+)(out). It carries out the reaction NH4(+)(in) = NH4(+)(out). It catalyses the reaction methylamine(out) = methylamine(in). The enzyme catalyses Mg(2+)(in) = Mg(2+)(out). The catalysed reaction is Ca(2+)(in) = Ca(2+)(out). It carries out the reaction Sr(2+)(in) = Sr(2+)(out). It catalyses the reaction chloride(in) = chloride(out). The enzyme catalyses nitrate(in) = nitrate(out). Forms paracellular channels: polymerizes in tight junction strands with cation- and anion-selective channels through the strands, conveying epithelial permeability in a process known as paracellular tight junction permeability. Its function is as follows. Forms cation-selective paracellular channels. In sweat glands and in the thick ascending limb (TAL) of Henle's loop in kidney, it controls paracellular sodium permeability which is essential for proper sweat production and renal function. Functionally, forms anion-selective paracellular channels. In renal proximal tubules, it conveys selective chloride over hydrogencarbonate anion permeability which is required for renal chloride reabsorption and salt homeostasis. The protein is Claudin-10 of Mus musculus (Mouse).